The following is a 557-amino-acid chain: ADP-ribosylation factor-binding protein GGA1 (557 aa).

One can recognise a VHS domain in the interval 29–165 (ACRSTLPEPD…LLKYKGYTFP (137 aa)). Positions 192–317 (ERAQAAKLEE…LLKRYKSIKG (126 aa)) constitute a GAT domain. Thr-348 is modified (phosphothreonine). A phosphoserine mark is found at Ser-353, Ser-357, Ser-378, and Ser-394. Residues 440–556 (AQSQRHILNQ…EESGTTSLPT (117 aa)) form the GAE domain.

In terms of assembly, binds to ARF1 and ARF2.

Its subcellular location is the golgi apparatus. The protein localises to the trans-Golgi network. Functionally, may play a role in the regulation of membrane traffic through the trans-Golgi network. This is ADP-ribosylation factor-binding protein GGA1 (GGA1) from Saccharomyces cerevisiae (strain ATCC 204508 / S288c) (Baker's yeast).